We begin with the raw amino-acid sequence, 695 residues long: ATP-dependent zinc metalloprotease FtsH (695 aa).

The Cytoplasmic portion of the chain corresponds to Met-1 to Asn-15. The chain crosses the membrane as a helical span at residues Ile-16–Ser-36. The Extracellular portion of the chain corresponds to Asn-37–Gln-139. A helical membrane pass occupies residues Ile-140–Gly-160. Over Met-161–Glu-695 the chain is Cytoplasmic. Residue Gly-233–Thr-240 coordinates ATP. His-456 provides a ligand contact to Zn(2+). Glu-457 is an active-site residue. 2 residues coordinate Zn(2+): His-460 and Asp-532. Residues Lys-657–Glu-695 form a disordered region. The segment covering Gly-674–Glu-695 has biased composition (basic and acidic residues).

In the central section; belongs to the AAA ATPase family. It in the C-terminal section; belongs to the peptidase M41 family. In terms of assembly, homohexamer. Requires Zn(2+) as cofactor.

The protein localises to the cell membrane. Acts as a processive, ATP-dependent zinc metallopeptidase for both cytoplasmic and membrane proteins. Plays a role in the quality control of integral membrane proteins. The protein is ATP-dependent zinc metalloprotease FtsH of Lactococcus lactis subsp. lactis (strain IL1403) (Streptococcus lactis).